The chain runs to 300 residues: Tetrahydromethanopterin S-methyltransferase subunit E (300 aa).

The next 6 helical transmembrane spans lie at 62–82 (PVSYGLYVAAAGATAWALMGM), 86–106 (PILAIIVGSAVAALVHGAYSV), 135–155 (PIVGHGFIAVFCMLFAAYLAV), 158–178 (LGNPFPLPLVALIFGITVGAI), 226–246 (YFCSKLGGPLTGLAFGLIIFL), and 261–281 (LITKAAIAIVVGLIVVITTLL).

Belongs to the MtrE family. The complex is composed of 8 subunits; MtrA, MtrB, MtrC, MtrD, MtrE, MtrF, MtrG and MtrH.

It is found in the cell membrane. The enzyme catalyses 5-methyl-5,6,7,8-tetrahydromethanopterin + coenzyme M + 2 Na(+)(in) = 5,6,7,8-tetrahydromethanopterin + methyl-coenzyme M + 2 Na(+)(out). Its pathway is one-carbon metabolism; methanogenesis from CO(2); methyl-coenzyme M from 5,10-methylene-5,6,7,8-tetrahydromethanopterin: step 2/2. In terms of biological role, part of a complex that catalyzes the formation of methyl-coenzyme M and tetrahydromethanopterin from coenzyme M and methyl-tetrahydromethanopterin. This is an energy-conserving, sodium-ion translocating step. This Methanococcus aeolicus (strain ATCC BAA-1280 / DSM 17508 / OCM 812 / Nankai-3) protein is Tetrahydromethanopterin S-methyltransferase subunit E.